The chain runs to 490 residues: MSILSRAANKLQPGKTLLVPKNKFKVADEEWGHLPEYVVPAANKIVHPFYQYPNATERTALCITERNPKLFNGKPVLPAFVRHPVTSESTLVESRLSFDTVKDVSKWVQRIHKSGDRLFHKVNITSSDSGPKVRKTKLTSESPFVKQLDNFLNSHPQLSFETLDSELSKLFIFHKGQEVIYLEEIFLYILQRDNLTVPQWKATLKTLPKYVGKEIDDIDMLNTLLIQWVLSGEQLFTKIDTPALNLLWNVIKSSRESLNQNIITNLNNVQLDKLFDTFLKGKDIKVSRILLETLASRRIMPSLPSIEEYIELVGQAGQETDAGIVPLERKSKLYLLHVLSPVFASNLTCRMTDLLLPYCIHQSEIFALLDLALKSKYSKDIAKSCVNNFVLRIAQLKDSQVDNSLNISSLYYRIKAYNNGTVPNANLLAFIIALLTNSNFRAVQTIINEQPVKEITKVIEVVKNQTTFIDQFGFTGVDRETLLHFLNNRA.

The protein belongs to the AEP1 family.

The protein resides in the mitochondrion. Functionally, required for translation of the mitochondrial OLI1 transcript encoding subunit 9 of mitochondrial ATP synthase. The protein is ATPase expression protein 1, mitochondrial (AEP1) of Kluyveromyces lactis (strain ATCC 8585 / CBS 2359 / DSM 70799 / NBRC 1267 / NRRL Y-1140 / WM37) (Yeast).